A 597-amino-acid polypeptide reads, in one-letter code: mRNA-capping enzyme (597 aa).

The TPase stretch occupies residues 1 to 212 (MAYNKIPPRW…DEDGKKDSEP (212 aa)). Residues 25-183 (LPLKTMLGPR…FRRYGDIEEA (159 aa)) form the Tyrosine-protein phosphatase domain. The active-site Phosphocysteine intermediate is the cysteine 126. Residues 181 to 221 (EEAPPPPVLPDWCFEDEDEEDEDEDGKKDSEPGSSASFSKR) form a disordered region. Residues 193 to 204 (CFEDEDEEDEDE) show a composition bias toward acidic residues. The GTase stretch occupies residues 229–597 (GAIFLEGITV…PPPKRLHRPT (369 aa)). Lysine 294 (N6-GMP-lysine intermediate) is an active-site residue. Residues arginine 299, arginine 315, 343–345 (DGE), 458–460 (KWK), and 528–533 (RQRIDK) contribute to the GTP site. The interval 330 to 386 (RKDLRMHLSNTLLDGEMIIDKVNGQAVPRYLIYDIIKFNAQPVGDCDFNIRLQCIER) is interaction with POLR2A. The interval 573–597 (KRKYPLDPDTELMPPPPPKRLHRPT) is disordered.

This sequence in the N-terminal section; belongs to the non-receptor class of the protein-tyrosine phosphatase family. It in the C-terminal section; belongs to the eukaryotic GTase family. In terms of assembly, interacts with SUPT5H and RNMT. Interacts with POLR2A (via C-terminus); this enhances guanylyltransferase activity. Binds (via GTase domain) to the elongating phosphorylated form of RNA polymerase II; can form direct interactions with the phosphorylated POLR2A C-terminal domain and indirect interactions via bound RNA.

The protein localises to the nucleus. The enzyme catalyses a 5'-end triphospho-ribonucleoside in mRNA + H2O = a 5'-end diphospho-ribonucleoside in mRNA + phosphate + H(+). It catalyses the reaction a 5'-end diphospho-ribonucleoside in mRNA + GTP + H(+) = a 5'-end (5'-triphosphoguanosine)-ribonucleoside in mRNA + diphosphate. Its activity is regulated as follows. RNA triphosphatase activity is inhibited by vanadate, iodoacetate and magnesium. In terms of biological role, bifunctional mRNA-capping enzyme exhibiting RNA 5'-triphosphate monophosphatase activity in the N-terminal part and mRNA guanylyltransferase activity in the C-terminal part. Catalyzes the first two steps of cap formation: by removing the gamma-phosphate from the 5'-triphosphate end of nascent mRNA to yield a diphosphate end, and by transferring the GMP moiety of GTP to the 5'-diphosphate terminus of RNA via a covalent enzyme-GMP reaction intermediate. The polypeptide is mRNA-capping enzyme (Rngtt) (Mus musculus (Mouse)).